The sequence spans 1029 residues: Chitin synthase 2 (1029 aa).

Disordered regions lie at residues 1–160 (MDRP…GARS), 174–216 (SDVD…SHLR), and 234–257 (AHYGPAPAEGDQQRRGVREPQKSR). Over residues 61-77 (PSVSSIHSRPSSISNIP) the composition is skewed to low complexity. The span at 244-257 (DQQRRGVREPQKSR) shows a compositional bias: basic and acidic residues. Residue Asn-348 is glycosylated (N-linked (GlcNAc...) asparagine). 8 consecutive transmembrane segments (helical) span residues 639–659 (WLNGAFFAAIYSLVHFRQLWA), 681–701 (VLFTFFSLANFYLTFYFVAGG), 716–736 (LYIFTILRYTLILLICAQFIL), 752–772 (SMVIYGIVMVYTTFAAFYIVI), 791–811 (NLIVSMASTIGLYFLMSFIYL), 820–840 (SIQYFMLLPSYLCTLQVYAFC), 918–938 (YMVVSWMIANGILGMAVSEIY), and 952–972 (ILWSVASLALFRALGSTTFAI).

Belongs to the chitin synthase family. Class II subfamily.

Its subcellular location is the cell membrane. It carries out the reaction [(1-&gt;4)-N-acetyl-beta-D-glucosaminyl](n) + UDP-N-acetyl-alpha-D-glucosamine = [(1-&gt;4)-N-acetyl-beta-D-glucosaminyl](n+1) + UDP + H(+). In terms of biological role, polymerizes chitin, a structural polymer of the cell wall and septum, by transferring the sugar moiety of UDP-GlcNAc to the non-reducing end of the growing chitin polymer. Plays an important role in cell wall integrity and has distinct functions in invasive hyphae and vegetative hyphae, but is not involved in plant infection. The protein is Chitin synthase 2 of Pyricularia oryzae (strain 70-15 / ATCC MYA-4617 / FGSC 8958) (Rice blast fungus).